Consider the following 410-residue polypeptide: Peptidase T (410 aa).

H78 contacts Zn(2+). Residue D80 is part of the active site. D140 lines the Zn(2+) pocket. The active-site Proton acceptor is the E174. Zn(2+)-binding residues include E175, D197, and H379.

It belongs to the peptidase M20B family. It depends on Zn(2+) as a cofactor.

It is found in the cytoplasm. The enzyme catalyses Release of the N-terminal residue from a tripeptide.. Its function is as follows. Cleaves the N-terminal amino acid of tripeptides. The sequence is that of Peptidase T from Staphylococcus saprophyticus subsp. saprophyticus (strain ATCC 15305 / DSM 20229 / NCIMB 8711 / NCTC 7292 / S-41).